Here is a 393-residue protein sequence, read N- to C-terminus: NAD(P)H-quinone oxidoreductase subunit H, chloroplastic (393 aa).

It belongs to the complex I 49 kDa subunit family. NDH is composed of at least 16 different subunits, 5 of which are encoded in the nucleus.

The protein resides in the plastid. Its subcellular location is the chloroplast thylakoid membrane. The catalysed reaction is a plastoquinone + NADH + (n+1) H(+)(in) = a plastoquinol + NAD(+) + n H(+)(out). The enzyme catalyses a plastoquinone + NADPH + (n+1) H(+)(in) = a plastoquinol + NADP(+) + n H(+)(out). NDH shuttles electrons from NAD(P)H:plastoquinone, via FMN and iron-sulfur (Fe-S) centers, to quinones in the photosynthetic chain and possibly in a chloroplast respiratory chain. The immediate electron acceptor for the enzyme in this species is believed to be plastoquinone. Couples the redox reaction to proton translocation, and thus conserves the redox energy in a proton gradient. This chain is NAD(P)H-quinone oxidoreductase subunit H, chloroplastic, found in Guizotia abyssinica (Niger).